Reading from the N-terminus, the 258-residue chain is Small ribosomal subunit protein mS23 (258 aa).

It belongs to the mitochondrion-specific ribosomal protein mS23 family. Component of the mitochondrial small ribosomal subunit.

It is found in the mitochondrion. This chain is Small ribosomal subunit protein mS23, found in Aspergillus fumigatus (strain CBS 144.89 / FGSC A1163 / CEA10) (Neosartorya fumigata).